We begin with the raw amino-acid sequence, 293 residues long: MVEHYSVLHKEVLEFSKLIEGEVFVDATVGGGGHSYLILKQNLNLKLIGLDKDDYALKVAKERLKEFEDRITLVKSSFKDLDKVLQSLQIKEINGILFDFGVSTFQLKLERGFSFQREEFLDMRMDTTQKLTAYDIVNYYREQDLYNIIKTYGEEKFASKIAKSIVEYRKKKKIETTKELADIVYRCYPPNLRHGKIHPATRTFQAIRIEVNNELKDIEEGLEKAINLLAKNGIIMAISFHSLEDRIVKNMFKKYKELKFLEILTKKPITPSDEEIKENPASRSAKLRVGRRI.

S-adenosyl-L-methionine-binding positions include 32–34, Asp-51, Phe-78, Asp-99, and Gln-106; that span reads GGH. The interval 272–293 is disordered; it reads SDEEIKENPASRSAKLRVGRRI.

The protein belongs to the methyltransferase superfamily. RsmH family.

The protein resides in the cytoplasm. The catalysed reaction is cytidine(1402) in 16S rRNA + S-adenosyl-L-methionine = N(4)-methylcytidine(1402) in 16S rRNA + S-adenosyl-L-homocysteine + H(+). Its function is as follows. Specifically methylates the N4 position of cytidine in position 1402 (C1402) of 16S rRNA. In Sulfurihydrogenibium sp. (strain YO3AOP1), this protein is Ribosomal RNA small subunit methyltransferase H.